Consider the following 527-residue polypeptide: Glutamate--cysteine ligase (527 aa).

The protein belongs to the glutamate--cysteine ligase type 1 family. Type 1 subfamily.

The enzyme catalyses L-cysteine + L-glutamate + ATP = gamma-L-glutamyl-L-cysteine + ADP + phosphate + H(+). The protein operates within sulfur metabolism; glutathione biosynthesis; glutathione from L-cysteine and L-glutamate: step 1/2. In Pseudomonas aeruginosa (strain LESB58), this protein is Glutamate--cysteine ligase.